The chain runs to 614 residues: DNA mismatch repair protein MutL (614 aa).

The protein belongs to the DNA mismatch repair MutL/HexB family.

Functionally, this protein is involved in the repair of mismatches in DNA. It is required for dam-dependent methyl-directed DNA mismatch repair. May act as a 'molecular matchmaker', a protein that promotes the formation of a stable complex between two or more DNA-binding proteins in an ATP-dependent manner without itself being part of a final effector complex. This is DNA mismatch repair protein MutL from Thermoanaerobacter pseudethanolicus (strain ATCC 33223 / 39E) (Clostridium thermohydrosulfuricum).